Here is a 218-residue protein sequence, read N- to C-terminus: Probable transaldolase (218 aa).

Lysine 87 (schiff-base intermediate with substrate) is an active-site residue.

It belongs to the transaldolase family. Type 3B subfamily.

Its subcellular location is the cytoplasm. The enzyme catalyses D-sedoheptulose 7-phosphate + D-glyceraldehyde 3-phosphate = D-erythrose 4-phosphate + beta-D-fructose 6-phosphate. Its pathway is carbohydrate degradation; pentose phosphate pathway; D-glyceraldehyde 3-phosphate and beta-D-fructose 6-phosphate from D-ribose 5-phosphate and D-xylulose 5-phosphate (non-oxidative stage): step 2/3. Transaldolase is important for the balance of metabolites in the pentose-phosphate pathway. The polypeptide is Probable transaldolase (Cytophaga hutchinsonii (strain ATCC 33406 / DSM 1761 / CIP 103989 / NBRC 15051 / NCIMB 9469 / D465)).